We begin with the raw amino-acid sequence, 198 residues long: Holliday junction resolvase RecU (198 aa).

Residues 1-29 (MIRYPNGKSYQPKTAASSLQKKPSYSNRG) form a disordered region. Residues 8-29 (KSYQPKTAASSLQKKPSYSNRG) are compositionally biased toward polar residues. Positions 83, 85, 98, and 117 each coordinate Mg(2+).

Belongs to the RecU family. Mg(2+) serves as cofactor.

Its subcellular location is the cytoplasm. It catalyses the reaction Endonucleolytic cleavage at a junction such as a reciprocal single-stranded crossover between two homologous DNA duplexes (Holliday junction).. Functionally, endonuclease that resolves Holliday junction intermediates in genetic recombination. Cleaves mobile four-strand junctions by introducing symmetrical nicks in paired strands. Promotes annealing of linear ssDNA with homologous dsDNA. Required for DNA repair, homologous recombination and chromosome segregation. This is Holliday junction resolvase RecU from Bacillus licheniformis (strain ATCC 14580 / DSM 13 / JCM 2505 / CCUG 7422 / NBRC 12200 / NCIMB 9375 / NCTC 10341 / NRRL NRS-1264 / Gibson 46).